Consider the following 193-residue polypeptide: Xanthine phosphoribosyltransferase (193 aa).

Xanthine contacts are provided by Leu-20 and Asn-27. 5-phospho-alpha-D-ribose 1-diphosphate is bound at residue 129–133 (ANGKA). Residue Lys-157 participates in xanthine binding.

The protein belongs to the purine/pyrimidine phosphoribosyltransferase family. Xpt subfamily. Homodimer.

Its subcellular location is the cytoplasm. It catalyses the reaction XMP + diphosphate = xanthine + 5-phospho-alpha-D-ribose 1-diphosphate. Its pathway is purine metabolism; XMP biosynthesis via salvage pathway; XMP from xanthine: step 1/1. In terms of biological role, converts the preformed base xanthine, a product of nucleic acid breakdown, to xanthosine 5'-monophosphate (XMP), so it can be reused for RNA or DNA synthesis. This Bifidobacterium longum subsp. infantis (strain ATCC 15697 / DSM 20088 / JCM 1222 / NCTC 11817 / S12) protein is Xanthine phosphoribosyltransferase.